Reading from the N-terminus, the 281-residue chain is CDAN1-interacting nuclease 1 (281 aa).

The protein resides in the nucleus. It is found in the cytoplasm. In terms of biological role, plays a role in erythroid cell differentiation. This is CDAN1-interacting nuclease 1 (CDIN1) from Bos taurus (Bovine).